The primary structure comprises 208 residues: Uracil phosphoribosyltransferase (208 aa).

Residues R78, R103, and 130–138 (DPMLATGGT) each bind 5-phospho-alpha-D-ribose 1-diphosphate. Uracil contacts are provided by residues I193 and 198–200 (GDA). D199 is a binding site for 5-phospho-alpha-D-ribose 1-diphosphate.

It belongs to the UPRTase family. Mg(2+) is required as a cofactor.

It catalyses the reaction UMP + diphosphate = 5-phospho-alpha-D-ribose 1-diphosphate + uracil. It functions in the pathway pyrimidine metabolism; UMP biosynthesis via salvage pathway; UMP from uracil: step 1/1. Its activity is regulated as follows. Allosterically activated by GTP. Catalyzes the conversion of uracil and 5-phospho-alpha-D-ribose 1-diphosphate (PRPP) to UMP and diphosphate. In Nitratidesulfovibrio vulgaris (strain ATCC 29579 / DSM 644 / CCUG 34227 / NCIMB 8303 / VKM B-1760 / Hildenborough) (Desulfovibrio vulgaris), this protein is Uracil phosphoribosyltransferase.